A 158-amino-acid chain; its full sequence is Ribonuclease H (158 aa).

One can recognise an RNase H type-1 domain in the interval 5–146 (MRKQIEIFTD…CDQLAKQGAE (142 aa)). Residues aspartate 14, glutamate 52, aspartate 74, and aspartate 138 each coordinate Mg(2+).

It belongs to the RNase H family. As to quaternary structure, monomer. It depends on Mg(2+) as a cofactor.

The protein resides in the cytoplasm. The enzyme catalyses Endonucleolytic cleavage to 5'-phosphomonoester.. Its function is as follows. Endonuclease that specifically degrades the RNA of RNA-DNA hybrids. The chain is Ribonuclease H from Mannheimia succiniciproducens (strain KCTC 0769BP / MBEL55E).